A 380-amino-acid polypeptide reads, in one-letter code: Tubby-like F-box protein 9 (380 aa).

One can recognise an F-box domain in the interval 30-76; it reads PFSWSELPEELLREILIRVETVDGGDWPSRRNVVACAGVCRSWRILT. The interval 258 to 283 is disordered; it reads SSRSSPVFRSHSKPLRSNSASCSDSG. Residues 272 to 283 are compositionally biased toward polar residues; that stretch reads LRSNSASCSDSG.

Belongs to the TUB family. Part of a SCF (SKP1-cullin-F-box) protein ligase complex. Interacts with SKP1A/ASK1 and XERICO. Ubiquitous.

The protein operates within protein modification; protein ubiquitination. Its function is as follows. Component of SCF(ASK-cullin-F-box) E3 ubiquitin ligase complexes, which may mediate the ubiquitination and subsequent proteasomal degradation of target proteins. Confers sensitivity to ABA during seed germination and early seedling development. In Arabidopsis thaliana (Mouse-ear cress), this protein is Tubby-like F-box protein 9.